The primary structure comprises 473 residues: Nuclear distribution protein PAC1 (473 aa).

One can recognise a LisH domain in the interval Q9–V41. Residues T60–T87 adopt a coiled-coil conformation. The segment covering Q80–R93 has biased composition (polar residues). A disordered region spans residues Q80 to V99. 8 WD repeats span residues S113 to K154, H156 to R196, G200 to T247, G250 to T289, G292 to L352, G354 to R393, D397 to G434, and V435 to A472.

It belongs to the WD repeat LIS1/nudF family. In terms of assembly, self-associates. Interacts with NDL1 and dynein.

Its subcellular location is the cytoplasm. The protein localises to the cytoskeleton. The protein resides in the spindle pole. Its function is as follows. Positively regulates the activity of the minus-end directed microtubule motor protein dynein. May enhance dynein-mediated microtubule sliding by targeting dynein to the microtubule plus end. Required for nuclear migration during vegetative growth as well as development. Required for retrograde early endosome (EE) transport from the hyphal tip. Required for localization of dynein to the mitotic spindle poles. Recruits additional proteins to the dynein complex at SPBs. This is Nuclear distribution protein PAC1 from Ajellomyces dermatitidis (strain ER-3 / ATCC MYA-2586) (Blastomyces dermatitidis).